Consider the following 470-residue polypeptide: Neuraminidase (470 aa).

Residues 1–14 lie on the Intravirion side of the membrane; the sequence is MNPNQKIITIGSAS. The tract at residues 11 to 32 is involved in apical transport and lipid raft association; the sequence is GSASLGLVFLNVILHVVSITVT. Residues 15-35 form a helical membrane-spanning segment; sequence LGLVFLNVILHVVSITVTVLV. The hypervariable stalk region stretch occupies residues 32-86; the sequence is TVLVLSNNVTGPNCNGTIIREYNGTVRIERITQWYNTNIIEYIERPSNEYYMSNT. Residues 36 to 470 are Virion surface-facing; it reads LSNNVTGPNC…AILPFDIDKM (435 aa). N-linked (GlcNAc...) asparagine; by host glycans are attached at residues Asn-39, Asn-46, and Asn-54. The tract at residues 89–470 is head of neuraminidase; sequence LCEAQGFAPF…AILPFDIDKM (382 aa). 8 disulfide bridges follow: Cys-90–Cys-417, Cys-122–Cys-127, Cys-182–Cys-229, Cys-231–Cys-236, Cys-277–Cys-290, Cys-279–Cys-288, Cys-316–Cys-335, and Cys-421–Cys-446. Substrate is bound at residue Arg-116. An N-linked (GlcNAc...) asparagine; by host glycan is attached at Asn-144. Asp-149 acts as the Proton donor/acceptor in catalysis. Arg-150 contributes to the substrate binding site. Residue 275 to 276 coordinates substrate; that stretch reads EE. Residue Arg-291 coordinates substrate. Asp-292 is a binding site for Ca(2+). The N-linked (GlcNAc...) asparagine; by host glycan is linked to Asn-293. Ca(2+) is bound by residues Gly-296 and Asp-322. Arg-368 lines the substrate pocket. Residue Asn-398 is glycosylated (N-linked (GlcNAc...) asparagine; by host). Tyr-402 serves as the catalytic Nucleophile.

The protein belongs to the glycosyl hydrolase 34 family. Homotetramer. Ca(2+) is required as a cofactor. In terms of processing, N-glycosylated.

The protein resides in the virion membrane. It is found in the host apical cell membrane. The catalysed reaction is Hydrolysis of alpha-(2-&gt;3)-, alpha-(2-&gt;6)-, alpha-(2-&gt;8)- glycosidic linkages of terminal sialic acid residues in oligosaccharides, glycoproteins, glycolipids, colominic acid and synthetic substrates.. Inhibited by the neuraminidase inhibitors zanamivir (Relenza) and oseltamivir (Tamiflu). These drugs interfere with the release of progeny virus from infected cells and are effective against all influenza strains. Resistance to neuraminidase inhibitors is quite rare. In terms of biological role, catalyzes the removal of terminal sialic acid residues from viral and cellular glycoconjugates. Cleaves off the terminal sialic acids on the glycosylated HA during virus budding to facilitate virus release. Additionally helps virus spread through the circulation by further removing sialic acids from the cell surface. These cleavages prevent self-aggregation and ensure the efficient spread of the progeny virus from cell to cell. Otherwise, infection would be limited to one round of replication. Described as a receptor-destroying enzyme because it cleaves a terminal sialic acid from the cellular receptors. May facilitate viral invasion of the upper airways by cleaving the sialic acid moieties on the mucin of the airway epithelial cells. Likely to plays a role in the budding process through its association with lipid rafts during intracellular transport. May additionally display a raft-association independent effect on budding. Plays a role in the determination of host range restriction on replication and virulence. Sialidase activity in late endosome/lysosome traffic seems to enhance virus replication. This Aves (Horse) protein is Neuraminidase.